Consider the following 229-residue polypeptide: MDIIKLNATRREDSGKSASSRLRRAGQIPAIAYGRELAPQSVAISPKALLQVLGSDHGKNSVVELAIENGQTLTVMVRDYDYHPISRELVHADFIQVKLDQPVDVQIPFRCVGKPKGVVTGGVLQQIFRTIPVRCLPEKIPSFIEIDVTELDLGDSYKASGLKLPEGVKTLLADDQTIAVVNAPEKAGPEEEAKPAAGAPAAGAAAAPAAGAAAPAKGAAPAADKKDKK.

Disordered stretches follow at residues 1–21 (MDII…ASSR) and 182–229 (NAPE…KDKK). Residues 195–222 (PAAGAPAAGAAAAPAAGAAAPAKGAAPA) are compositionally biased toward low complexity.

Belongs to the bacterial ribosomal protein bL25 family. CTC subfamily. As to quaternary structure, part of the 50S ribosomal subunit; part of the 5S rRNA/L5/L18/L25 subcomplex. Contacts the 5S rRNA. Binds to the 5S rRNA independently of L5 and L18.

This is one of the proteins that binds to the 5S RNA in the ribosome where it forms part of the central protuberance. This Sorangium cellulosum (strain So ce56) (Polyangium cellulosum (strain So ce56)) protein is Large ribosomal subunit protein bL25.